The primary structure comprises 296 residues: Pantothenate synthetase (296 aa).

37-44 (MGALHTGH) lines the ATP pocket. The active-site Proton donor is H44. Q68 lines the (R)-pantoate pocket. A beta-alanine-binding site is contributed by Q68. 160 to 163 (GQKD) provides a ligand contact to ATP. Q166 is a (R)-pantoate binding site. ATP is bound by residues V189 and 197–200 (TSSR).

Belongs to the pantothenate synthetase family. In terms of assembly, homodimer.

Its subcellular location is the cytoplasm. The catalysed reaction is (R)-pantoate + beta-alanine + ATP = (R)-pantothenate + AMP + diphosphate + H(+). Its pathway is cofactor biosynthesis; (R)-pantothenate biosynthesis; (R)-pantothenate from (R)-pantoate and beta-alanine: step 1/1. Catalyzes the condensation of pantoate with beta-alanine in an ATP-dependent reaction via a pantoyl-adenylate intermediate. This Thermobifida fusca (strain YX) protein is Pantothenate synthetase.